Reading from the N-terminus, the 323-residue chain is tRNA dimethylallyltransferase (323 aa).

ATP is bound at residue 12-19 (GPTAAGKT). A substrate-binding site is contributed by 14 to 19 (TAAGKT). 2 interaction with substrate tRNA regions span residues 37 to 40 (DSAL) and 161 to 165 (QRLMR).

This sequence belongs to the IPP transferase family. Monomer. The cofactor is Mg(2+).

The enzyme catalyses adenosine(37) in tRNA + dimethylallyl diphosphate = N(6)-dimethylallyladenosine(37) in tRNA + diphosphate. Its function is as follows. Catalyzes the transfer of a dimethylallyl group onto the adenine at position 37 in tRNAs that read codons beginning with uridine, leading to the formation of N6-(dimethylallyl)adenosine (i(6)A). The sequence is that of tRNA dimethylallyltransferase from Pseudomonas aeruginosa (strain UCBPP-PA14).